The sequence spans 643 residues: Fructose-1,6-bisphosphatase class 3 (643 aa).

This sequence belongs to the FBPase class 3 family. Mn(2+) is required as a cofactor.

The enzyme catalyses beta-D-fructose 1,6-bisphosphate + H2O = beta-D-fructose 6-phosphate + phosphate. It functions in the pathway carbohydrate biosynthesis; gluconeogenesis. The protein is Fructose-1,6-bisphosphatase class 3 of Lacticaseibacillus casei (strain BL23) (Lactobacillus casei).